The primary structure comprises 353 residues: Draxin-B (353 aa).

A signal peptide spans 1 to 21 (MASSWCLPLALLVSNLAVSHS). Disordered regions lie at residues 23–183 (EPSS…KEGS), 198–222 (TVMS…RGKV), and 246–268 (VDAW…SGNV). The span at 138–167 (GPHKGKAQGHGHHFDHRRHGGRRDKGRHTK) shows a compositional bias: basic residues. Basic residues predominate over residues 252–261 (SRKKDKRRSK). Asparagine 262 and asparagine 267 each carry an N-linked (GlcNAc...) asparagine glycan.

It belongs to the draxin family.

It is found in the secreted. In terms of biological role, chemorepulsive axon guidance protein required for the development of spinal cord and forebrain commissures. Acts as a chemorepulsive guidance protein for commissural axons during development. Able to inhibit or repel neurite outgrowth from dorsal spinal cord. The sequence is that of Draxin-B (draxin-B) from Salmo salar (Atlantic salmon).